We begin with the raw amino-acid sequence, 356 residues long: Non-functional pseudokinase ZRK15 (356 aa).

The region spanning 62–356 is the Protein kinase domain; it reads NRVSELFDEI…SSSSCGETSL (295 aa). Residues 68–76 and Lys-94 contribute to the ATP site; that span reads FDEIPYDWY.

The protein belongs to the protein kinase superfamily. Ser/Thr protein kinase family. ZRK subfamily. As to quaternary structure, interacts with RPP13L4/ZAR1.

The sequence is that of Non-functional pseudokinase ZRK15 from Arabidopsis thaliana (Mouse-ear cress).